Consider the following 296-residue polypeptide: MDKIQETFLYMLKVERNFSEYTLKSYHDDLVQFNNFLEREHLQLETFEYKDARNYLAFLYSNQLKRTTVSRKISTLRTFYEFWMTQDNSIINPFVQLVHPKKEKYLPQFFYEEEMEALFQTVEHDNKKGIRDKVIIELLYATGIRVSELINIKLKDIDMNLPGVKVLGKGNKERFIPFGEFCRQSIERYLEEFQPKQLANHDYLIVNMKGDPITERGVRYVLNDVVKRTAGVNDIHPHKLRHTFATHLLNQGADLRTVQSLLGHVNLSTTGRYTHVSNQQLRKVYLNAHPRAKKGE.

Residues 1-84 (MDKIQETFLY…TLRTFYEFWM (84 aa)) enclose the Core-binding (CB) domain. One can recognise a Tyr recombinase domain in the interval 105 to 286 (YLPQFFYEEE…SNQQLRKVYL (182 aa)). Active-site residues include arginine 145, lysine 169, histidine 238, arginine 241, and histidine 264. Tyrosine 273 functions as the O-(3'-phospho-DNA)-tyrosine intermediate in the catalytic mechanism.

It belongs to the 'phage' integrase family. XerC subfamily. In terms of assembly, forms a cyclic heterotetrameric complex composed of two molecules of XerC and two molecules of XerD.

Its subcellular location is the cytoplasm. Site-specific tyrosine recombinase, which acts by catalyzing the cutting and rejoining of the recombining DNA molecules. The XerC-XerD complex is essential to convert dimers of the bacterial chromosome into monomers to permit their segregation at cell division. It also contributes to the segregational stability of plasmids. This Staphylococcus epidermidis (strain ATCC 35984 / DSM 28319 / BCRC 17069 / CCUG 31568 / BM 3577 / RP62A) protein is Tyrosine recombinase XerC.